The primary structure comprises 106 residues: Large ribosomal subunit protein eL42 (106 aa).

This sequence belongs to the eukaryotic ribosomal protein eL42 family.

In Eremothecium gossypii (strain ATCC 10895 / CBS 109.51 / FGSC 9923 / NRRL Y-1056) (Yeast), this protein is Large ribosomal subunit protein eL42 (RPL44).